The sequence spans 235 residues: Geranylgeranylglyceryl phosphate synthase (235 aa).

A sn-glycerol 1-phosphate-binding site is contributed by Lys-13. Mg(2+)-binding residues include Asp-15 and Thr-42. Residues 162 to 167, Gly-192, and 212 to 213 each bind sn-glycerol 1-phosphate; these read YVEYSG and GD.

It belongs to the GGGP/HepGP synthase family. Group I subfamily. Mg(2+) serves as cofactor.

The protein resides in the cytoplasm. It catalyses the reaction sn-glycerol 1-phosphate + (2E,6E,10E)-geranylgeranyl diphosphate = sn-3-O-(geranylgeranyl)glycerol 1-phosphate + diphosphate. Its pathway is membrane lipid metabolism; glycerophospholipid metabolism. Functionally, prenyltransferase that catalyzes the transfer of the geranylgeranyl moiety of geranylgeranyl diphosphate (GGPP) to the C3 hydroxyl of sn-glycerol-1-phosphate (G1P). This reaction is the first ether-bond-formation step in the biosynthesis of archaeal membrane lipids. This Natronomonas pharaonis (strain ATCC 35678 / DSM 2160 / CIP 103997 / JCM 8858 / NBRC 14720 / NCIMB 2260 / Gabara) (Halobacterium pharaonis) protein is Geranylgeranylglyceryl phosphate synthase.